A 435-amino-acid polypeptide reads, in one-letter code: Xylose isomerase (435 aa).

Mg(2+) contacts are provided by aspartate 306 and aspartate 308.

Belongs to the xylose isomerase family. In terms of assembly, homotetramer. It depends on Mg(2+) as a cofactor.

It localises to the cytoplasm. The enzyme catalyses alpha-D-xylose = alpha-D-xylulofuranose. This Allorhizobium ampelinum (strain ATCC BAA-846 / DSM 112012 / S4) (Agrobacterium vitis (strain S4)) protein is Xylose isomerase.